Reading from the N-terminus, the 51-residue chain is Probable antitoxin PhoAT (51 aa).

Belongs to the PhoAT antitoxin family. As to quaternary structure, interacts with toxin PhoH2.

Antitoxin component of a type II toxin-antitoxin (TA) system. The cognate antitoxin is PhoAT; the toxin gene cannot be expressed in the absence of the antitoxin gene in M.smegmatis (strain mc(2)4517), and abrogates the toxic effects of PhoH2 in M.smegmatis strain mc(2)155. The sequence is that of Probable antitoxin PhoAT from Mycobacterium tuberculosis (strain ATCC 25618 / H37Rv).